The primary structure comprises 146 residues: NADPH-dependent 7-cyano-7-deazaguanine reductase (146 aa).

C48 serves as the catalytic Thioimide intermediate. D55 acts as the Proton donor in catalysis. Substrate is bound by residues V70–S72 and H89–E90.

It belongs to the GTP cyclohydrolase I family. QueF type 1 subfamily.

It localises to the cytoplasm. The enzyme catalyses 7-aminomethyl-7-carbaguanine + 2 NADP(+) = 7-cyano-7-deazaguanine + 2 NADPH + 3 H(+). Its pathway is tRNA modification; tRNA-queuosine biosynthesis. Catalyzes the NADPH-dependent reduction of 7-cyano-7-deazaguanine (preQ0) to 7-aminomethyl-7-deazaguanine (preQ1). The protein is NADPH-dependent 7-cyano-7-deazaguanine reductase of Helicobacter pylori (strain Shi470).